A 96-amino-acid polypeptide reads, in one-letter code: Ferredoxin (96 aa).

The region spanning 4–94 (YKVKLLTPEG…DVVIETHKEE (91 aa)) is the 2Fe-2S ferredoxin-type domain. The [2Fe-2S] cluster site is built by cysteine 40, cysteine 45, cysteine 48, and cysteine 78.

It belongs to the 2Fe2S plant-type ferredoxin family. The cofactor is [2Fe-2S] cluster.

It localises to the plastid. The protein localises to the chloroplast. Its function is as follows. Ferredoxins are iron-sulfur proteins that transfer electrons in a wide variety of metabolic reactions. The protein is Ferredoxin of Panax ginseng (Korean ginseng).